Reading from the N-terminus, the 101-residue chain is Small ribosomal subunit protein bS6 (101 aa).

It belongs to the bacterial ribosomal protein bS6 family.

In terms of biological role, binds together with bS18 to 16S ribosomal RNA. This chain is Small ribosomal subunit protein bS6, found in Oleidesulfovibrio alaskensis (strain ATCC BAA-1058 / DSM 17464 / G20) (Desulfovibrio alaskensis).